The following is a 134-amino-acid chain: Cytochrome b (134 aa).

The next 3 membrane-spanning stretches (helical) occupy residues 33 to 53 (FGSL…FLAI), 77 to 98 (WLLR…YLHV), and 113 to 133 (WNIG…GYVL). The heme b site is built by histidine 83 and histidine 97.

Belongs to the cytochrome b family. As to quaternary structure, the cytochrome bc1 complex contains 11 subunits: 3 respiratory subunits (MT-CYB, CYC1 and UQCRFS1), 2 core proteins (UQCRC1 and UQCRC2) and 6 low-molecular weight proteins (UQCRH/QCR6, UQCRB/QCR7, UQCRQ/QCR8, UQCR10/QCR9, UQCR11/QCR10 and a cleavage product of UQCRFS1). This cytochrome bc1 complex then forms a dimer. It depends on heme b as a cofactor.

The protein resides in the mitochondrion inner membrane. In terms of biological role, component of the ubiquinol-cytochrome c reductase complex (complex III or cytochrome b-c1 complex) that is part of the mitochondrial respiratory chain. The b-c1 complex mediates electron transfer from ubiquinol to cytochrome c. Contributes to the generation of a proton gradient across the mitochondrial membrane that is then used for ATP synthesis. This Platyrrhinus helleri (Heller's broad-nosed bat) protein is Cytochrome b (MT-CYB).